Consider the following 143-residue polypeptide: Boletus edulis lectin (143 aa).

Residues Ala-30, 49-50 (SG), and 72-73 (HN) contribute to the beta-D-Gal-(1-&gt;3)-alpha-D-GalNAc site. Residues 49–50 (SG) and 72–73 (HN) each bind N-acetyl-alpha-D-galactosamine. N,N'-diacetylchitobiose-binding positions include 79–82 (DVVT), Arg-103, and Tyr-114. N-acetyl-alpha-D-glucosamine contacts are provided by residues 79-82 (DVVT), Arg-103, and Tyr-114.

It belongs to the fungal fruit body lectin family. Homotetramer.

Its function is as follows. Lectin that recognizes O-linked galactose-beta-1,3-N-acetylgalactosamine, a disaccharide (Thomsen-Friedenreich antigen or T-disaccharide), present on cell surface glycoproteins. Can also bind chitin, N,N'-diacetylchitobiose, N-acetylgalactosamine and N-acetylglucosamine. Inhibits proliferation of colon, breast and liver cancer cell lines (in vitro). This is Boletus edulis lectin from Boletus edulis (King bolete).